A 222-amino-acid chain; its full sequence is UPF0128 protein PYRAB08320 (222 aa).

It belongs to the UPF0128 family.

The chain is UPF0128 protein PYRAB08320 from Pyrococcus abyssi (strain GE5 / Orsay).